The chain runs to 905 residues: MEELTIWEQHTATLYKDPRRGFGIAVSGGHDRASGSVVVSDVVPGSPAEGRLRTGDHIVMVNGVSVENVTSAFAIQILKTCTKTANVTVKRPRRVQLPATKASPASGHQLSDQEEADHGRGYEGDSSSGSGRSWGERSRRSRAGRRGRVGSHGRRSSGGGSEANGLDLVSGYKRLPKQDVLMRPLKSVLVKRRNSEEFGVKLGSQIFIKHITESGLAARNHGLQEGDLILQINGVSSANLSLSDTRRLIEKSEGELTLLVLRDSGQFLVNIPPAVSDSDSSLMEDISDLTSELSQAPPSHVPPPPLKGQRSPEDSQTDSPVETPQPRRRERSVNSRAIAEPESPGESRYDIYRVPSRQSLEDRGYSPDTRVVSFPKGASIGLRLAGGNDVGIFVSGVQAGSPADGQGIQEGDEILQVNGMPFRNLTREEAVQFLLGLPPGEDMELVTQSKTGHSLRRWSQSRVGDSFYIRTHFELEPSPPYGLGFTRGDVFHVVDTLYPGSGPGHGHSSHGGLWLAARMGRDLREQERGVIPNQSRAEQLASLEAAQRAAGVGPGASVGSNPRAEFWRLRSLRRGTKKASTQRSREDLSALTRQGHYPPYERVVLREASFKRPVVILGPVADIAMKKLTTEMPEEFEIAESMSRTDSPSKIIKLDTVRVIAERDKHALLDVTPSAIERLNYVQYYPIVIFCAPESRPALKALREWLAPASRRSSRRLYAQAQKLQKHSGHLFTATIPLHGTSDSWYQEVKAVIQQQQARPIWTAEDQLNSSSEDLDLTGHGLAASSGDLSCDSRTNSDYEDTDGEGAYTDREGGPQDVDEEVAPTALARSSEPVWVDDHQGLMGHGTTITDKWETQADSHYTQDQRRQDSMRTYKHEALRKKFTRARDVESSDDEGYDWGPATDL.

The PDZ 1 domain occupies Thr-11–Arg-93. The tract at residues Pro-92–Asp-167 is disordered. Ser-111 and Ser-128 each carry phosphoserine. Low complexity predominate over residues Gly-124–Ser-133. Over residues Arg-139 to Arg-155 the composition is skewed to basic residues. Ser-156, Ser-157, Ser-161, Ser-195, and Ser-311 each carry phosphoserine. The PDZ 2 domain occupies Ser-187–Ser-264. Residues Leu-289–Pro-367 are disordered. Thr-317 is modified (phosphothreonine). 3 positions are modified to phosphoserine: Ser-319, Ser-343, and Ser-359. A PDZ 3 domain is found at Asp-368–Leu-434. The 78-residue stretch at Gly-464 to Ala-541 folds into the SH3 domain. Positions Arg-573–Gln-754 constitute a Guanylate kinase-like domain. A Phosphoserine modification is found at Ser-584. Disordered stretches follow at residues Glu-773–Val-818 and Thr-850–Leu-905. The span at Asp-851–Glu-877 shows a compositional bias: basic and acidic residues. 2 positions are modified to phosphoserine: Ser-891 and Ser-892.

Belongs to the MAGUK family. As to quaternary structure, interacts with occludin OCLN, claudins and TPJ1. Interacts with PATJ. Interacts with UBN1. Interacts with FASLG. Interacts with CCND1. Post-translationally, phosphorylated. As to expression, is concentrated in various types of epithelium, in tissues such as the lung, liver and kidney, but not in endothelium or at cadherin-based cell-cell adhesion sites.

Its subcellular location is the cell membrane. The protein localises to the cell junction. The protein resides in the tight junction. It localises to the nucleus. Its function is as follows. Tjp1, Tjp2, and Tjp3 are closely related scaffolding proteins that link tight junction (TJ) transmembrane proteins such as claudins, junctional adhesion molecules, and occludin to the actin cytoskeleton. The tight junction acts to limit movement of substances through the paracellular space and as a boundary between the compositionally distinct apical and basolateral plasma membrane domains of epithelial and endothelial cells. Binds and recruits PatJ to tight junctions where it connects and stabilizes apical and lateral components of tight junctions. Promotes cell-cycle progression through the sequestration of cyclin D1 (Ccnd1) at tight junctions during mitosis which prevents Ccnd1 degradation during M-phase and enables S-phase transition. With Tjp1 and Tjp2, participates in the junctional retention and stability of the transcription factor DbpA, but is not involved in its shuttling to the nucleus. Contrary to Tjp2, Tjp3 is dispensable for individual viability, embryonic development, epithelial differentiation, and the establishment of TJs, at least in the laboratory environment. The polypeptide is Tight junction protein ZO-3 (Tjp3) (Mus musculus (Mouse)).